Consider the following 479-residue polypeptide: Beta-monoglucosyldiacylglycerol synthase (479 aa).

A run of 4 helical transmembrane segments spans residues 48–68 (AAVM…WVWG), 363–383 (FLLM…MALW), 389–409 (LLTP…YYGL), and 428–448 (LART…MPAV).

This sequence belongs to the glycosyltransferase 2 family. Mg(2+) is required as a cofactor.

It localises to the membrane. It catalyses the reaction a 1,2-diacyl-sn-glycerol + UDP-alpha-D-glucose = a 1,2-diacyl-3-O-(beta-D-glucopyranosyl)-sn-glycerol + UDP + H(+). Glucosyltransferase involved in the biosynthesis of the non-bilayer-forming membrane lipid beta-monoglucosyldiacylglycerol which contributes to regulate the properties and stability of the membrane. Catalyzes the transfer of a glucosyl residue from UDP-Glc to diacylglycerol (DAG) acceptor to form the corresponding beta-glucosyl-DAG (1,2-diacyl-3-O-(beta-D-glucopyranosyl)-sn-glycerol). It can only use UDP-Glc as sugar donor. Two types of DAG (dipalmitoyl-DAG (DPDAG) and 1-oleoyl-2-palmitoyl-DAG (OPDAG)) can be used as sugar acceptors, but OPDAG is preferred. This Synechocystis sp. (strain ATCC 27184 / PCC 6803 / Kazusa) protein is Beta-monoglucosyldiacylglycerol synthase.